The primary structure comprises 284 residues: 2-dehydro-3-deoxyphosphooctonate aldolase (284 aa).

Belongs to the KdsA family.

It localises to the cytoplasm. It catalyses the reaction D-arabinose 5-phosphate + phosphoenolpyruvate + H2O = 3-deoxy-alpha-D-manno-2-octulosonate-8-phosphate + phosphate. It functions in the pathway carbohydrate biosynthesis; 3-deoxy-D-manno-octulosonate biosynthesis; 3-deoxy-D-manno-octulosonate from D-ribulose 5-phosphate: step 2/3. Its pathway is bacterial outer membrane biogenesis; lipopolysaccharide biosynthesis. This chain is 2-dehydro-3-deoxyphosphooctonate aldolase, found in Citrobacter koseri (strain ATCC BAA-895 / CDC 4225-83 / SGSC4696).